A 335-amino-acid polypeptide reads, in one-letter code: Pro-cathepsin H (335 aa).

The signal sequence occupies residues 1-22 (MWAVLSLLCAGAWLLGPPACGA). Positions 23-97 (SNLAVSSFEK…DEIRHKYLWS (75 aa)) are excised as a propeptide. Asn72 and Asn101 each carry an N-linked (GlcNAc...) asparagine glycan. Disulfide bonds link Cys102–Cys327, Cys138–Cys181, Cys172–Cys214, and Cys272–Cys322. The propeptide occupies 107-115 (GNYLRGTGP). Cys141 is an active-site residue. The N-linked (GlcNAc...) asparagine glycan is linked to Asn230. Active-site residues include His281 and Asn301.

It belongs to the peptidase C1 family. As to quaternary structure, composed of cathepsin H and mini chain; disulfide-linked. Cathepsin H may be split into heavy and light chain. All chains are held together by disulfide bonds.

The protein resides in the lysosome. It carries out the reaction Hydrolysis of proteins, acting as an aminopeptidase (notably, cleaving Arg-|-Xaa bonds) as well as an endopeptidase.. In terms of biological role, important for the overall degradation of proteins in lysosomes. This chain is Pro-cathepsin H (CTSH), found in Sus scrofa (Pig).